The chain runs to 115 residues: CRISPR-associated endoribonuclease Cas2 (115 aa).

Position 22 (Asp22) interacts with Mg(2+).

It belongs to the CRISPR-associated endoribonuclease Cas2 protein family. In terms of assembly, homodimer, forms a heterotetramer with a Cas1 homodimer. The cofactor is Mg(2+).

In terms of biological role, CRISPR (clustered regularly interspaced short palindromic repeat), is an adaptive immune system that provides protection against mobile genetic elements (viruses, transposable elements and conjugative plasmids). CRISPR clusters contain sequences complementary to antecedent mobile elements and target invading nucleic acids. CRISPR clusters are transcribed and processed into CRISPR RNA (crRNA). Functions as a ssRNA-specific endoribonuclease. Involved in the integration of spacer DNA into the CRISPR cassette. The polypeptide is CRISPR-associated endoribonuclease Cas2 (Flavobacterium psychrophilum (strain ATCC 49511 / DSM 21280 / CIP 103535 / JIP02/86)).